The chain runs to 104 residues: Transcription elongation factor A protein-like 9 (104 aa).

The tract at residues 1 to 48 (MKPCQKMEGNLEKEDEPKPEEEPKPEEKPEEGQEPEEEEKSEETFRER) is disordered. The segment covering 9-31 (GNLEKEDEPKPEEEPKPEEKPEE) has biased composition (basic and acidic residues). A compositionally biased stretch (acidic residues) spans 32-41 (GQEPEEEEKS).

Belongs to the TFS-II family. TFA subfamily.

It localises to the nucleus. May be involved in transcriptional regulation. The protein is Transcription elongation factor A protein-like 9 (Tceal9) of Mus musculus (Mouse).